Reading from the N-terminus, the 156-residue chain is ATP synthase subunit b (156 aa).

Residues 7 to 29 (LIGQSVAFLIFVWFCMKFVWPPL) form a helical membrane-spanning segment.

The protein belongs to the ATPase B chain family. In terms of assembly, F-type ATPases have 2 components, F(1) - the catalytic core - and F(0) - the membrane proton channel. F(1) has five subunits: alpha(3), beta(3), gamma(1), delta(1), epsilon(1). F(0) has three main subunits: a(1), b(2) and c(10-14). The alpha and beta chains form an alternating ring which encloses part of the gamma chain. F(1) is attached to F(0) by a central stalk formed by the gamma and epsilon chains, while a peripheral stalk is formed by the delta and b chains.

The protein resides in the cell inner membrane. Its function is as follows. F(1)F(0) ATP synthase produces ATP from ADP in the presence of a proton or sodium gradient. F-type ATPases consist of two structural domains, F(1) containing the extramembraneous catalytic core and F(0) containing the membrane proton channel, linked together by a central stalk and a peripheral stalk. During catalysis, ATP synthesis in the catalytic domain of F(1) is coupled via a rotary mechanism of the central stalk subunits to proton translocation. Component of the F(0) channel, it forms part of the peripheral stalk, linking F(1) to F(0). The chain is ATP synthase subunit b from Shewanella denitrificans (strain OS217 / ATCC BAA-1090 / DSM 15013).